A 126-amino-acid polypeptide reads, in one-letter code: Holo-[acyl-carrier-protein] synthase (126 aa).

Mg(2+) contacts are provided by Asp-8 and Glu-57.

This sequence belongs to the P-Pant transferase superfamily. AcpS family. Mg(2+) serves as cofactor.

The protein resides in the cytoplasm. The catalysed reaction is apo-[ACP] + CoA = holo-[ACP] + adenosine 3',5'-bisphosphate + H(+). Functionally, transfers the 4'-phosphopantetheine moiety from coenzyme A to a Ser of acyl-carrier-protein. The chain is Holo-[acyl-carrier-protein] synthase from Geobacter sulfurreducens (strain ATCC 51573 / DSM 12127 / PCA).